The primary structure comprises 493 residues: Glutamyl-tRNA(Gln) amidotransferase subunit A (493 aa).

Active-site charge relay system residues include Lys79 and Ser159. Ser183 serves as the catalytic Acyl-ester intermediate.

The protein belongs to the amidase family. GatA subfamily. In terms of assembly, heterotrimer of A, B and C subunits.

The catalysed reaction is L-glutamyl-tRNA(Gln) + L-glutamine + ATP + H2O = L-glutaminyl-tRNA(Gln) + L-glutamate + ADP + phosphate + H(+). Allows the formation of correctly charged Gln-tRNA(Gln) through the transamidation of misacylated Glu-tRNA(Gln) in organisms which lack glutaminyl-tRNA synthetase. The reaction takes place in the presence of glutamine and ATP through an activated gamma-phospho-Glu-tRNA(Gln). The chain is Glutamyl-tRNA(Gln) amidotransferase subunit A from Brucella ovis (strain ATCC 25840 / 63/290 / NCTC 10512).